The chain runs to 257 residues: Imidazole glycerol phosphate synthase subunit HisF (257 aa).

Active-site residues include Asp-11 and Asp-130.

Belongs to the HisA/HisF family. In terms of assembly, heterodimer of HisH and HisF.

The protein resides in the cytoplasm. The enzyme catalyses 5-[(5-phospho-1-deoxy-D-ribulos-1-ylimino)methylamino]-1-(5-phospho-beta-D-ribosyl)imidazole-4-carboxamide + L-glutamine = D-erythro-1-(imidazol-4-yl)glycerol 3-phosphate + 5-amino-1-(5-phospho-beta-D-ribosyl)imidazole-4-carboxamide + L-glutamate + H(+). The protein operates within amino-acid biosynthesis; L-histidine biosynthesis; L-histidine from 5-phospho-alpha-D-ribose 1-diphosphate: step 5/9. Its function is as follows. IGPS catalyzes the conversion of PRFAR and glutamine to IGP, AICAR and glutamate. The HisF subunit catalyzes the cyclization activity that produces IGP and AICAR from PRFAR using the ammonia provided by the HisH subunit. The polypeptide is Imidazole glycerol phosphate synthase subunit HisF (Actinobacillus pleuropneumoniae serotype 7 (strain AP76)).